The following is a 170-amino-acid chain: ATP synthase subunit b (170 aa).

The helical transmembrane segment at 15–37 (FNLFETNILNWAVVVFGLYKFLP) threads the bilayer.

It belongs to the ATPase B chain family. In terms of assembly, F-type ATPases have 2 components, F(1) - the catalytic core - and F(0) - the membrane proton channel. F(1) has five subunits: alpha(3), beta(3), gamma(1), delta(1), epsilon(1). F(0) has four main subunits: a(1), b(1), b'(1) and c(10-14). The alpha and beta chains form an alternating ring which encloses part of the gamma chain. F(1) is attached to F(0) by a central stalk formed by the gamma and epsilon chains, while a peripheral stalk is formed by the delta, b and b' chains.

It is found in the cellular thylakoid membrane. F(1)F(0) ATP synthase produces ATP from ADP in the presence of a proton or sodium gradient. F-type ATPases consist of two structural domains, F(1) containing the extramembraneous catalytic core and F(0) containing the membrane proton channel, linked together by a central stalk and a peripheral stalk. During catalysis, ATP synthesis in the catalytic domain of F(1) is coupled via a rotary mechanism of the central stalk subunits to proton translocation. Its function is as follows. Component of the F(0) channel, it forms part of the peripheral stalk, linking F(1) to F(0). The sequence is that of ATP synthase subunit b from Prochlorococcus marinus (strain MIT 9312).